A 93-amino-acid polypeptide reads, in one-letter code: Large ribosomal subunit protein eL42 (93 aa).

Zn(2+) is bound by residues Cys-11, Cys-14, Cys-71, and Cys-74. The segment at 11–74 (CRYCGKHTLH…VNIRFRCTEC (64 aa)) adopts a C4-type zinc-finger fold.

The protein belongs to the eukaryotic ribosomal protein eL42 family. As to quaternary structure, part of the 50S ribosomal subunit. Zn(2+) is required as a cofactor.

Functionally, binds to the 23S rRNA. This Archaeoglobus fulgidus (strain ATCC 49558 / DSM 4304 / JCM 9628 / NBRC 100126 / VC-16) protein is Large ribosomal subunit protein eL42.